A 73-amino-acid polypeptide reads, in one-letter code: Large ribosomal subunit protein bL31 (73 aa).

It belongs to the bacterial ribosomal protein bL31 family. Type A subfamily. Part of the 50S ribosomal subunit.

In terms of biological role, binds the 23S rRNA. The polypeptide is Large ribosomal subunit protein bL31 (Bartonella bacilliformis (strain ATCC 35685 / KC583 / Herrer 020/F12,63)).